The primary structure comprises 335 residues: Beta-ketoacyl-[acyl-carrier-protein] synthase III (335 aa).

Catalysis depends on residues cysteine 119 and histidine 261. The interval 262–266 (QANQR) is ACP-binding. Residue asparagine 291 is part of the active site.

Belongs to the thiolase-like superfamily. FabH family. Homodimer.

The protein resides in the cytoplasm. The catalysed reaction is malonyl-[ACP] + acetyl-CoA + H(+) = 3-oxobutanoyl-[ACP] + CO2 + CoA. The protein operates within lipid metabolism; fatty acid biosynthesis. Functionally, catalyzes the condensation reaction of fatty acid synthesis by the addition to an acyl acceptor of two carbons from malonyl-ACP. Catalyzes the first condensation reaction which initiates fatty acid synthesis and may therefore play a role in governing the total rate of fatty acid production. Possesses both acetoacetyl-ACP synthase and acetyl transacylase activities. Its substrate specificity determines the biosynthesis of branched-chain and/or straight-chain of fatty acids. In Prochlorococcus marinus subsp. pastoris (strain CCMP1986 / NIES-2087 / MED4), this protein is Beta-ketoacyl-[acyl-carrier-protein] synthase III.